The following is a 512-amino-acid chain: Cytochrome P450 72A11 (512 aa).

Residues 2 to 22 (EISVASVTVSVAVVVVSWWVW) traverse the membrane as a helical segment. Position 460 (Cys-460) interacts with heme.

This sequence belongs to the cytochrome P450 family. It depends on heme as a cofactor.

It is found in the membrane. The chain is Cytochrome P450 72A11 (CYP72A11) from Arabidopsis thaliana (Mouse-ear cress).